The following is a 309-amino-acid chain: Ribosomal RNA small subunit methyltransferase H (309 aa).

S-adenosyl-L-methionine-binding positions include 39–41 (GGH), D59, F83, D100, and Q107.

The protein belongs to the methyltransferase superfamily. RsmH family.

The protein resides in the cytoplasm. The enzyme catalyses cytidine(1402) in 16S rRNA + S-adenosyl-L-methionine = N(4)-methylcytidine(1402) in 16S rRNA + S-adenosyl-L-homocysteine + H(+). Specifically methylates the N4 position of cytidine in position 1402 (C1402) of 16S rRNA. The chain is Ribosomal RNA small subunit methyltransferase H from Delftia acidovorans (strain DSM 14801 / SPH-1).